A 393-amino-acid polypeptide reads, in one-letter code: S-adenosylmethionine synthase 2 (393 aa).

Glu-9 provides a ligand contact to Mg(2+). Residue His-15 coordinates ATP. Position 43 (Glu-43) interacts with K(+). Positions 56 and 99 each coordinate L-methionine. Residues 167–169 (DGK), 235–238 (SGRF), Asp-246, 252–253 (RK), Ala-269, Lys-273, and Lys-277 each bind ATP. Asp-246 provides a ligand contact to L-methionine. Lys-277 is a binding site for L-methionine.

The protein belongs to the AdoMet synthase family. As to quaternary structure, homotetramer. Interacts with GRF3. The cofactor is Mn(2+). Mg(2+) is required as a cofactor. Co(2+) serves as cofactor. It depends on K(+) as a cofactor. Highly expressed in stems and roots. Detected in trichomes (at the protein level).

The protein resides in the cytoplasm. The catalysed reaction is L-methionine + ATP + H2O = S-adenosyl-L-methionine + phosphate + diphosphate. It participates in amino-acid biosynthesis; S-adenosyl-L-methionine biosynthesis; S-adenosyl-L-methionine from L-methionine: step 1/1. Its activity is regulated as follows. Inhibited by 5,5'-dithiobis-2-nitrobenzoic acid (DTNB) and N-ethylmaleimide (NEM) (in vitro). Catalyzes the formation of S-adenosylmethionine from methionine and ATP. The reaction comprises two steps that are both catalyzed by the same enzyme: formation of S-adenosylmethionine (AdoMet) and triphosphate, and subsequent hydrolysis of the triphosphate. In Arabidopsis thaliana (Mouse-ear cress), this protein is S-adenosylmethionine synthase 2 (SAM2).